Reading from the N-terminus, the 208-residue chain is Guanylate kinase (208 aa).

The Guanylate kinase-like domain occupies 4–184 (GTLYIVSAPS…ALMDFKAIIR (181 aa)). An ATP-binding site is contributed by 11–18 (APSGAGKS).

This sequence belongs to the guanylate kinase family.

It is found in the cytoplasm. It carries out the reaction GMP + ATP = GDP + ADP. Essential for recycling GMP and indirectly, cGMP. This is Guanylate kinase from Photobacterium profundum (strain SS9).